A 368-amino-acid polypeptide reads, in one-letter code: Phosphoserine aminotransferase (368 aa).

L-glutamate is bound at residue Arg44. Pyridoxal 5'-phosphate contacts are provided by residues 78–79 (AT), Trp104, Thr157, Asp179, and Gln202. Lys203 is modified (N6-(pyridoxal phosphate)lysine). 244–245 (NT) contributes to the pyridoxal 5'-phosphate binding site.

The protein belongs to the class-V pyridoxal-phosphate-dependent aminotransferase family. SerC subfamily. As to quaternary structure, homodimer. Pyridoxal 5'-phosphate serves as cofactor.

Its subcellular location is the cytoplasm. It carries out the reaction O-phospho-L-serine + 2-oxoglutarate = 3-phosphooxypyruvate + L-glutamate. The catalysed reaction is 4-(phosphooxy)-L-threonine + 2-oxoglutarate = (R)-3-hydroxy-2-oxo-4-phosphooxybutanoate + L-glutamate. Its pathway is amino-acid biosynthesis; L-serine biosynthesis; L-serine from 3-phospho-D-glycerate: step 2/3. It participates in cofactor biosynthesis; pyridoxine 5'-phosphate biosynthesis; pyridoxine 5'-phosphate from D-erythrose 4-phosphate: step 3/5. Functionally, catalyzes the reversible conversion of 3-phosphohydroxypyruvate to phosphoserine and of 3-hydroxy-2-oxo-4-phosphonooxybutanoate to phosphohydroxythreonine. This chain is Phosphoserine aminotransferase, found in Neisseria gonorrhoeae (strain ATCC 700825 / FA 1090).